Here is a 123-residue protein sequence, read N- to C-terminus: Small ribosomal subunit protein uS12 (123 aa).

At Asp89 the chain carries 3-methylthioaspartic acid.

The protein belongs to the universal ribosomal protein uS12 family. As to quaternary structure, part of the 30S ribosomal subunit. Contacts proteins S8 and S17. May interact with IF1 in the 30S initiation complex.

Its function is as follows. With S4 and S5 plays an important role in translational accuracy. Functionally, interacts with and stabilizes bases of the 16S rRNA that are involved in tRNA selection in the A site and with the mRNA backbone. Located at the interface of the 30S and 50S subunits, it traverses the body of the 30S subunit contacting proteins on the other side and probably holding the rRNA structure together. The combined cluster of proteins S8, S12 and S17 appears to hold together the shoulder and platform of the 30S subunit. The protein is Small ribosomal subunit protein uS12 of Brucella abortus (strain S19).